Reading from the N-terminus, the 419-residue chain is UDP-N-acetylglucosamine 1-carboxyvinyltransferase (419 aa).

Position 22–23 (22–23 (KN)) interacts with phosphoenolpyruvate. Residue Arg91 participates in UDP-N-acetyl-alpha-D-glucosamine binding. Residue Cys115 is the Proton donor of the active site. Residue Cys115 is modified to 2-(S-cysteinyl)pyruvic acid O-phosphothioketal. Residues 120 to 124 (RPVDL), 160 to 163 (KVSV), Asp305, and Ile327 contribute to the UDP-N-acetyl-alpha-D-glucosamine site.

This sequence belongs to the EPSP synthase family. MurA subfamily.

It localises to the cytoplasm. The enzyme catalyses phosphoenolpyruvate + UDP-N-acetyl-alpha-D-glucosamine = UDP-N-acetyl-3-O-(1-carboxyvinyl)-alpha-D-glucosamine + phosphate. The protein operates within cell wall biogenesis; peptidoglycan biosynthesis. Cell wall formation. Adds enolpyruvyl to UDP-N-acetylglucosamine. This is UDP-N-acetylglucosamine 1-carboxyvinyltransferase from Serratia proteamaculans (strain 568).